The following is a 377-amino-acid chain: Histone deacetylase 8 (377 aa).

Residues 14–324 (LVPVYIYSPE…WTYLTGVILG (311 aa)) are histone deacetylase. The residue at position 39 (serine 39) is a Phosphoserine. Residue aspartate 101 participates in substrate binding. The active-site Proton acceptor is histidine 143. Glycine 151 contributes to the substrate binding site. Aspartate 178, histidine 180, and aspartate 267 together coordinate a divalent metal cation. Tyrosine 306 serves as a coordination point for substrate.

Belongs to the histone deacetylase family. HD type 1 subfamily. Interacts with PEPB2-MYH11, a fusion protein consisting of the 165 N-terminal residues of CBF-beta (PEPB2) with the tail region of MYH11 produced by the inversion Inv(16)(p13q22), a translocation associated with acute myeloid leukemia of M4EO subtype. The PEPB2-MYH1 fusion protein also interacts with RUNX1, a well known transcriptional regulator, suggesting that the interaction with HDAC8 may participate in the conversion of RUNX1 into a constitutive transcriptional repressor. Interacts with CBFA2T3. Interacts with phosphorylated SMG5/EST1B; this interaction protects SMG5 from ubiquitin-mediated degradation. Associates with alpha-SMA (smooth muscle alpha-actin). It depends on a divalent metal cation as a cofactor. Phosphorylated by PKA on serine 39. Phosphorylation reduces deacetylase activity observed preferentially on histones H3 and H4. In terms of tissue distribution, weakly expressed in most tissues. Expressed at higher level in heart, brain, kidney and pancreas and also in liver, lung, placenta, prostate and kidney.

The protein resides in the nucleus. It is found in the chromosome. It localises to the cytoplasm. The catalysed reaction is N(6)-acetyl-L-lysyl-[histone] + H2O = L-lysyl-[histone] + acetate. It carries out the reaction N(6)-acetyl-L-lysyl-[protein] + H2O = L-lysyl-[protein] + acetate. The enzyme catalyses N(6)-(2E)-butenoyl-L-lysyl-[protein] + H2O = (2E)-2-butenoate + L-lysyl-[protein]. Its activity is inhibited by trichostatin A (TSA), suberoylanilide hydroxamic acid (SAHA), 3-(1-methyl-4-phenylacetyl-1H-2-pyrrolyl)-N-hydroxy-2-propenamide (APHA), 4-dimethylamino-N-(6-hydroxycarbamoyethyl)benzamide-N-hydroxy-7-(4-dimethylaminobenzoyl)aminoheptanamide (MS-344), 5-(4-methyl-benzoylamino)-biphenyl-3,4'-dicarboxylic acid 3-dimethylamide 4'-hydroxyamide (CRA-A) and butyrate. In terms of biological role, histone deacetylase that catalyzes the deacetylation of lysine residues on the N-terminal part of the core histones (H2A, H2B, H3 and H4). Histone deacetylation gives a tag for epigenetic repression and plays an important role in transcriptional regulation, cell cycle progression and developmental events. Histone deacetylases act via the formation of large multiprotein complexes. Also involved in the deacetylation of cohesin complex protein SMC3 regulating release of cohesin complexes from chromatin. May play a role in smooth muscle cell contractility. In addition to protein deacetylase activity, also has protein-lysine deacylase activity: acts as a protein decrotonylase by mediating decrotonylation ((2E)-butenoyl) of histones. This chain is Histone deacetylase 8, found in Homo sapiens (Human).